Here is a 191-residue protein sequence, read N- to C-terminus: Potassium-transporting ATPase KdpC subunit (191 aa).

A helical membrane pass occupies residues 8 to 28; it reads LFLFLLLLLVTGLAYPLLTTV.

This sequence belongs to the KdpC family. In terms of assembly, the system is composed of three essential subunits: KdpA, KdpB and KdpC.

It localises to the cell inner membrane. In terms of biological role, part of the high-affinity ATP-driven potassium transport (or Kdp) system, which catalyzes the hydrolysis of ATP coupled with the electrogenic transport of potassium into the cytoplasm. This subunit acts as a catalytic chaperone that increases the ATP-binding affinity of the ATP-hydrolyzing subunit KdpB by the formation of a transient KdpB/KdpC/ATP ternary complex. The polypeptide is Potassium-transporting ATPase KdpC subunit (Pectobacterium atrosepticum (strain SCRI 1043 / ATCC BAA-672) (Erwinia carotovora subsp. atroseptica)).